Reading from the N-terminus, the 273-residue chain is Undecaprenyl-diphosphatase (273 aa).

A run of 7 helical transmembrane segments spans residues 6–26 (SLLI…LPVS), 45–65 (AKTF…VMFW), 90–110 (LTLI…LLFH), 116–136 (LFNP…LIAA), 190–210 (YAAS…ATAL), 222–242 (GDIP…LIAI), and 252–272 (ISFI…YVVF).

The protein belongs to the UppP family.

The protein localises to the cell inner membrane. The enzyme catalyses di-trans,octa-cis-undecaprenyl diphosphate + H2O = di-trans,octa-cis-undecaprenyl phosphate + phosphate + H(+). Its function is as follows. Catalyzes the dephosphorylation of undecaprenyl diphosphate (UPP). Confers resistance to bacitracin. This is Undecaprenyl-diphosphatase from Escherichia coli O7:K1 (strain IAI39 / ExPEC).